The sequence spans 622 residues: Palmitoyltransferase ZDHHC13 (622 aa).

The residue at position 1 (Met1) is an N-acetylmethionine. Residues 1–291 (MEGPGLGSQC…RLWRWLHKCE (291 aa)) are Cytoplasmic-facing. 7 ANK repeats span residues 43 to 78 (PLIEDSSNCDIVKATQYGIFERCKELVEAGYDVRQP), 81 to 110 (ENVSLLHWAAINNRLELVKFYISKGAVIDQ), 115 to 144 (LNSTPLHWAIRQGHLPMVILLLQHGADPTL), 148 to 177 (EGFSSIHLAVLFQHMPIIAYLISKGQSVNM), 181 to 211 (NGQTPLMLSAYKVIGPEPTGFLLKFNPSLSV), 216 to 245 (HQNTPLHWAVAAGNVSAVDKLLEAGSSLDI), and 249 to 277 (KGETPLDMALQSKNQLISHMLRTEAKMRA). Residues 292–312 (LFLLLILSMITLWAVGYILDF) traverse the membrane as a helical segment. Topologically, residues 313–320 (NSDSWLLK) are lumenal. A helical membrane pass occupies residues 321 to 341 (GCLLVALFFLTSLFPRFLVGY). Residues 342-347 (KNLVYL) lie on the Cytoplasmic side of the membrane. The helical transmembrane segment at 348 to 368 (PTVFLLSSIFWIFMTWFILFF) threads the bilayer. Over 369–371 (PDT) the chain is Lumenal. Residues 372–392 (AGSPLYFAFIFSIMAFLYFFY) form a helical membrane-spanning segment. Residues 393–470 (KTWATDPGFT…RCIGFGNHHH (78 aa)) lie on the Cytoplasmic side of the membrane. One can recognise a DHHC domain in the interval 426 to 476 (TFCTSCLIRKPLRSLHCHVCNSCVARFDQHCFWTGRCIGFGNHHHYIFFLL). Cys456 (S-palmitoyl cysteine intermediate) is an active-site residue. The chain crosses the membrane as a helical span at residues 471–491 (YIFFLLSLSMVCDWIIYGSFV). Topologically, residues 492 to 518 (YWSNHCATTFKEDGLWTYLNQIVACSP) are lumenal. A helical membrane pass occupies residues 519 to 539 (WVLYIFMLAAFHFSWSTFLLI). Over 540-622 (NQLFQIAFLG…PAKEKVLRSV (83 aa)) the chain is Cytoplasmic.

It belongs to the DHHC palmitoyltransferase family. AKR/ZDHHC17 subfamily. Interacts (via ANK repeats) with CLIP3. Interacts (via ANK repeats) with DNAJC5 (via C-terminus). Interacts (via ANK repeats) with HTT. Interacts (via ANK repeats) with MAP6. Interacts (via ANK repeats) with SNAP23. Interacts (via ANK repeats) with SNAP25. May interact (via ANK repeats) with SPRED2. As to expression, expressed in most adult tissues, but at low levels in the liver, skin, and lung.

Its subcellular location is the golgi apparatus membrane. The protein resides in the cytoplasmic vesicle membrane. The enzyme catalyses L-cysteinyl-[protein] + hexadecanoyl-CoA = S-hexadecanoyl-L-cysteinyl-[protein] + CoA. Functionally, palmitoyltransferase that could catalyze the addition of palmitate onto various protein substrates. Palmitoyltransferase for HTT and GAD2. May play a role in Mg(2+) transport. The protein is Palmitoyltransferase ZDHHC13 of Mus musculus (Mouse).